The following is a 624-amino-acid chain: Chromosomal replication initiator protein DnaA (624 aa).

The interval 1 to 99 (MADVPADLAA…SAGEPPSPPA (99 aa)) is domain I, interacts with DnaA modulators. The segment at 88-284 (DDSAGEPPSP…APGPGEPHAR (197 aa)) is disordered. Residues 100–283 (PPMHQSHQSQ…PAPGPGEPHA (184 aa)) form a domain II region. Residues 102–112 (MHQSHQSQQGH) are compositionally biased toward low complexity. 2 stretches are compositionally biased toward basic and acidic residues: residues 118-141 (QRDDAPRGDAYDGYGHRPSDDGMP) and 176-206 (GYQDREQPSGEPYRESESYRERENEQYREQA). Gly residues predominate over residues 250-264 (PRQGGHGPGRTGGSV). Residues 284–500 (RLNPKYLFDT…GALIRVTAFA (217 aa)) are domain III, AAA+ region. Positions 328, 330, 331, and 332 each coordinate ATP. The segment at 501 to 624 (SLNRQPVDLG…TELTNRIKNG (124 aa)) is domain IV, binds dsDNA.

Belongs to the DnaA family. In terms of assembly, oligomerizes as a right-handed, spiral filament on DNA at oriC.

The protein resides in the cytoplasm. Functionally, plays an essential role in the initiation and regulation of chromosomal replication. ATP-DnaA binds to the origin of replication (oriC) to initiate formation of the DNA replication initiation complex once per cell cycle. Binds the DnaA box (a 9 base pair repeat at the origin) and separates the double-stranded (ds)DNA. Forms a right-handed helical filament on oriC DNA; dsDNA binds to the exterior of the filament while single-stranded (ss)DNA is stabiized in the filament's interior. The ATP-DnaA-oriC complex binds and stabilizes one strand of the AT-rich DNA unwinding element (DUE), permitting loading of DNA polymerase. After initiation quickly degrades to an ADP-DnaA complex that is not apt for DNA replication. Binds acidic phospholipids. Its function is as follows. The DnaA box consensus is 5'-(T/C)(T/C)(G/AC)TCCACA-3'. The polypeptide is Chromosomal replication initiator protein DnaA (Streptomyces anulatus (Streptomyces chrysomallus)).